The sequence spans 80 residues: Calmodulin (80 aa).

2 consecutive EF-hand domains span residues 12–47 and 48–80; these read DSEE…LGEK and LTDE…MTSK. Ca(2+) contacts are provided by Asp-25, Asp-27, Asn-29, Glu-36, Asp-61, Asp-63, Asp-65, Gln-67, and Glu-72.

This sequence belongs to the calmodulin family.

Its function is as follows. Calmodulin mediates the control of a large number of enzymes, ion channels and other proteins by Ca(2+). Among the enzymes to be stimulated by the calmodulin-Ca(2+) complex are a number of protein kinases and phosphatases. The protein is Calmodulin of Strongylocentrotus purpuratus (Purple sea urchin).